A 3855-amino-acid polypeptide reads, in one-letter code: Replicase polyprotein 1ab (3855 aa).

Residues cysteine 8 to cysteine 28 form a C4-type; atypical zinc finger. The region spanning glutamate 69–histidine 180 is the Peptidase C31 domain. A PCP1-alpha region spans residues glutamate 69 to serine 182. Residues cysteine 76 and histidine 146 each act as for nsp1-alpha papain-like cysteine proteinase activity in the active site. An important for host EIF2AK2 inhibition region spans residues methionine 203 to methionine 204. Positions proline 269–tyrosine 384 are PCP1-beta. A Peptidase C32 domain is found at proline 269–glycine 385. Residues cysteine 276 and histidine 345 each act as for nsp1-beta papain-like cysteine proteinase activity in the active site. Residues isoleucine 418–serine 505 are OTU-like. A Peptidase C33 domain is found at threonine 420–alanine 527. Residues cysteine 429 and histidine 498 each act as for nsp2 cysteine proteinase activity in the active site. 2 disordered regions span residues proline 752–alanine 797 and proline 1047–serine 1088. The segment covering alanine 775–asparagine 790 has biased composition (polar residues). Helical transmembrane passes span glycine 1134 to cysteine 1154, glycine 1179 to valine 1199, and tryptophan 1252 to valine 1272. Residues leucine 1149–valine 1272 form an HD1 region. The interval threonine 1327–asparagine 1351 is WCCH. Transmembrane regions (helical) follow at residues leucine 1468 to threonine 1488, leucine 1521 to glycine 1541, glutamate 1543 to leucine 1563, alanine 1573 to leucine 1593, and phenylalanine 1609 to tryptophan 1629. Residues leucine 1468 to tryptophan 1629 are HD2. One can recognise a Peptidase S32 domain in the interval glycine 1694–glutamate 1896. Residues histidine 1732, aspartate 1757, and serine 1810 each act as charge relay system; for serine protease nsp4 activity in the active site. Transmembrane regions (helical) follow at residues tryptophan 1919–valine 1939, phenylalanine 1943–isoleucine 1963, leucine 1977–glycine 1997, and serine 2020–phenylalanine 2040. Residues tryptophan 1919–phenylalanine 2040 are HD3. Residues isoleucine 2381 to glycine 2544 form the NiRAN domain. A RdRp catalytic domain is found at glycine 2783–tyrosine 2917. The AV ZBD domain maps to glycine 3038 to leucine 3101. Positions 3044, 3047, 3057, 3062, 3065, 3067, 3069, 3071, 3078, 3080, 3087, and 3090 each coordinate Zn(2+). One can recognise a (+)RNA virus helicase ATP-binding domain in the interval aspartate 3151–leucine 3310. ATP is bound at residue glycine 3186–threonine 3193. The 130-residue stretch at threonine 3311–leucine 3440 folds into the (+)RNA virus helicase C-terminal domain. In terms of domain architecture, AV-Nsp11N/CoV-Nsp15M spans glutamate 3479–glutamine 3576. One can recognise a NendoU domain in the interval leucine 3578 to phenylalanine 3700. Catalysis depends on residues histidine 3609, histidine 3624, and lysine 3653.

It belongs to the arteriviridae polyprotein family. Nsp1-alpha papain-like: Interacts with host RNF31. In terms of assembly, interacts with host EIF2AK2; this interaction occurs in host stress granules and leads to EIF2AK2 inhibition. Interacts with host G3BP1; this interaction probably plays a role in Nsp1-beta-mediated inhibition of host EIF2AK2. As to quaternary structure, interacts with host DDX18; this interaction redistributes host DDX18 to the cytoplasm. Interacts with host IFITM1. In terms of assembly, interacts with host DDX5. As to quaternary structure, interacts with host OTULIN. Interacts with host LGALS3. Post-translationally, specific enzymatic cleavages in vivo by its own proteases yield mature proteins. Nsp1 is autocleaved into two subunits, Nsp1-alpha and Nsp1-beta. There are two alternative pathways for processing. Either nsp4-5 is cleaved, which represents the major pathway or the nsp5-6 and nsp6-7 are processed, which represents the minor pathway. The major pathway occurs when nsp2 acts as a cofactor for nsp4.

The protein resides in the host nucleus. Its subcellular location is the host cytoplasm. It localises to the host membrane. It is found in the host endoplasmic reticulum. The protein localises to the host perinuclear region. It catalyses the reaction RNA(n) + a ribonucleoside 5'-triphosphate = RNA(n+1) + diphosphate. The catalysed reaction is ATP + H2O = ADP + phosphate + H(+). The enzyme catalyses Thiol-dependent hydrolysis of ester, thioester, amide, peptide and isopeptide bonds formed by the C-terminal Gly of ubiquitin (a 76-residue protein attached to proteins as an intracellular targeting signal).. It carries out the reaction uridylyl-uridylyl-ribonucleotide-RNA = a 3'-end uridylyl-2',3'-cyclophospho-uridine-RNA + a 5'-end dephospho-ribonucleoside-RNA. Contains the activities necessary for the transcription of negative stranded RNA, leader RNA, subgenomic mRNAs and progeny virion RNA as well as proteinases responsible for the cleavage of the polyprotein into functional products. In terms of biological role, inhibits host IFN-beta production. Plays a role in the degradation of the host transcriptional activator CREBBP protein. The degradation of host CREBBP which is a key component of the IFN enhanceosome is likely responsible for the inhibition of interferon mediated by Nsp1-alpha. Also participates in the inhibition of host NF-kappa-B activation by counteracting LUBAC-dependent induction of NF-kappa-B. Reduces host NEMO ubiquitination by blocking the interaction between the two LUBAC complex components RNF31 and SHARPIN. Its function is as follows. Plays a role in blocking host mRNA nuclear export to the cytoplasm and subversion of host protein synthesis. Additionally, inhibits the interferon-activated JAK/STAT signal transduction by mediating the ubiquitination and subsequent proteasomal degradation of host KPNA1. Repurposes the host antiviral stress granules into a proviral platform to counteract the EIF2AK2/PKR restriction, thereby regulating the host inflammatory response. Functionally, multifunctional protein that acts as a viral protease and as a viral antagonist of host immune response. Cleaves the nsp2/nsp3 site in the viral polyprotein. Displays deubiquitinating activity that cleaves both ubiquitinated and ISGylated products and therefore inhibits ubiquitin and ISG15-dependent host innate immunity. Also deubiquinates host NFKBIA, thereby interfering with NFKBIA degradation and impairing subsequent NF-kappa-B activation. Plays a role in the inhibition of the immune response by interacting with host IFITM1. This interaction leads to the proteasomal degradation of the IFN-induced antiviral protein IFITM1. In terms of biological role, cleaves the majority of cleavage sites present in the C-terminus of the polyprotein. Triggers host apoptosis through caspase-3, -8, and -9 activations. Subverts host innate immune responses through its protease activity. Targets the NF-kappa-B essential modulator NEMO and mediates its cleavage. Blocks host interferon beta induction and downstream signaling by cleaving mitochondrial MAVS, dislodging it from the mitochondria. Impairs host defense by cleaving host mRNA-decapping enzyme DCP1A to attenuate its antiviral activity. Its function is as follows. Plays a role in the initial induction of autophagosomes from host endoplasmic reticulum. Functionally, plays a role in the inhibition of host STAT3 signaling pathway by inducing the degradation of STAT3. Responsible for replication and transcription of the viral RNA genome. In terms of biological role, displays RNA and DNA duplex-unwinding activities with 5' to 3' polarity. Its function is as follows. Plays a role in viral transcription/replication and prevents the simultaneous activation of host cell dsRNA sensors, such as MDA5/IFIH1, OAS, PKR and NLRP3 inflammasome. Acts by degrading the 5'-polyuridines generated during replication of the poly(A) region of viral genomic and subgenomic RNAs. Catalyzes a two-step reaction in which a 2'3'-cyclic phosphate (2'3'-cP) is first generated by 2'-O transesterification, which is then hydrolyzed to a 3'-phosphate (3'-P). If not degraded, poly(U) RNA would hybridize with poly(A) RNA tails and activate host dsRNA sensors. Also plays a role in the inhibition of host type I interferon production by recruiting host OTULIN to promote removal of linear ubiquitination targeting host NEMO. The polypeptide is Replicase polyprotein 1ab (rep) (Sus scrofa (Pig)).